We begin with the raw amino-acid sequence, 309 residues long: Sulfate adenylyltransferase subunit 2 (309 aa).

This sequence belongs to the PAPS reductase family. CysD subfamily. In terms of assembly, heterodimer composed of CysD, the smaller subunit, and CysN.

It catalyses the reaction sulfate + ATP + H(+) = adenosine 5'-phosphosulfate + diphosphate. It functions in the pathway sulfur metabolism; hydrogen sulfide biosynthesis; sulfite from sulfate: step 1/3. With CysN forms the ATP sulfurylase (ATPS) that catalyzes the adenylation of sulfate producing adenosine 5'-phosphosulfate (APS) and diphosphate, the first enzymatic step in sulfur assimilation pathway. APS synthesis involves the formation of a high-energy phosphoric-sulfuric acid anhydride bond driven by GTP hydrolysis by CysN coupled to ATP hydrolysis by CysD. This Aeromonas salmonicida (strain A449) protein is Sulfate adenylyltransferase subunit 2.